The chain runs to 340 residues: Cytochrome P450 monooxygenase cheG (340 aa).

N25 carries N-linked (GlcNAc...) asparagine glycosylation. A helical transmembrane segment spans residues M37–I57. C283 is a binding site for heme. Residues L308–L340 are disordered. Residue N322 is glycosylated (N-linked (GlcNAc...) asparagine).

It belongs to the cytochrome P450 family. The cofactor is heme.

Its subcellular location is the membrane. It functions in the pathway secondary metabolite biosynthesis. Functionally, cytochrome P450 monooxygenase; part of the gene cluster that mediates the biosynthesis of chaetoglobosin A which has a unique inhibitory activity against actin polymerization in mammalian cells. Chaetoglobosin A and its intermediates are involved in the morphological differentiation of C.globosum. The first step of the pathway is the synthesis of prochaetoglobosin I via condensation of one acetyl-CoA, 8 malonyl-CoA, and a L-tryptophan molecule by the PKS-NRPS hybrid synthetase cheA, followed by reduction of backbone double bond to install desired geometry by the enoyl reductase cheB. Further multiple oxidation steps performed by the cytochrome P450 monooxygenases cheE and cheG, as well as by the FAD-linked oxidoreductase cheF, lead to the formation of chaetoglobosin A. Depending on the order of action of these reductases, distinct intermediates can be identified. Within the pathway, the cytochrome P450 monooxygenase cheE catalyzes a stereospecific epoxidation on prochaetoglobosin I, cytoglobosin D, and chaetoglobosin J intermediates. The FAD-linked oxidoreductase cheF performs dehydrogenation of the C-20 hydroxyl groups in the 20-dihyrochaetoglobosin A and cytoglobosin D intermediates. Finally, the cytochrome P450 monooxygenase cheG can catalyze the stereospecific dihydroxylation of prochaetoglobosin I and prochaetoglobosin IV at C-19 and C-20, respectively. The Diels-Alderase cheD may play a role in the post-PKS-NRPS biosynthetic steps catalyzing Diels-Alder cyclization. This Chaetomium globosum (strain ATCC 6205 / CBS 148.51 / DSM 1962 / NBRC 6347 / NRRL 1970) (Soil fungus) protein is Cytochrome P450 monooxygenase cheG.